Reading from the N-terminus, the 735-residue chain is uncharacterized protein (735 aa).

Residues 25–175 (DLSCLSPDLL…CIAAVLAGLL (151 aa)) enclose the GAF domain. Residues 185 to 255 (SEAARRAMLD…RQGFMRHLAT (71 aa)) enclose the PAS domain. The region spanning 263–313 (RLVEVEALRADGSVFPAELTVNEHRAGGRRLFSAFVRDISDRITSRRALER) is the PAC domain. Positions 342-464 (GAVVLMLRDL…DGHLLHFAEH (123 aa)) constitute a GGDEF domain. The 261-residue stretch at 472 to 732 (RLELEMALRD…VAGTLPETLA (261 aa)) folds into the EAL domain.

This is an uncharacterized protein from Azorhizobium caulinodans (strain ATCC 43989 / DSM 5975 / JCM 20966 / LMG 6465 / NBRC 14845 / NCIMB 13405 / ORS 571).